Here is a 24-residue protein sequence, read N- to C-terminus: Defensin D5 (24 aa).

It belongs to the DEFL family. Group IV subfamily. As to expression, distributed in the epidermal cell layer of leaves and in the subepidermal layer region of stems. Not in roots.

It is found in the secreted. It localises to the cell wall. Antimicrobial peptide. Active against Fusarium spp., Gram-positive and Gram-negative bacterial pathogens. This chain is Defensin D5, found in Spinacia oleracea (Spinach).